The sequence spans 166 residues: MADTGAPGGETLLFLTDEQLRKGIEAMFFAYRGFTADPDRILDQHDYGRAHHRAIHFINREPGLTVTTLISVLGVTKQSLNRVLRTLIDDGLVESRVGRRDKRERHLHLTEKGAVLERELSEAQRVRMRAAYRAAGPQAVAGFRQVLEAMMDPAMRRHYQMLKDAE.

An HTH marR-type domain is found at 17 to 152 (DEQLRKGIEA…FRQVLEAMMD (136 aa)). The segment at residues 66–89 (VTTLISVLGVTKQSLNRVLRTLID) is a DNA-binding region (H-T-H motif).

Necessary for photosynthetic and respiratory growth. The polypeptide is HTH-type transcriptional regulator PetP (petP) (Rhodobacter capsulatus (strain ATCC BAA-309 / NBRC 16581 / SB1003)).